The following is a 415-amino-acid chain: Serine hydroxymethyltransferase 3 (415 aa).

(6S)-5,6,7,8-tetrahydrofolate-binding positions include leucine 122 and 126 to 128; that span reads GHL. Lysine 230 bears the N6-(pyridoxal phosphate)lysine mark.

It belongs to the SHMT family. In terms of assembly, homodimer. The cofactor is pyridoxal 5'-phosphate.

The protein localises to the cytoplasm. The catalysed reaction is (6R)-5,10-methylene-5,6,7,8-tetrahydrofolate + glycine + H2O = (6S)-5,6,7,8-tetrahydrofolate + L-serine. It functions in the pathway one-carbon metabolism; tetrahydrofolate interconversion. The protein operates within amino-acid biosynthesis; glycine biosynthesis; glycine from L-serine: step 1/1. In terms of biological role, catalyzes the reversible interconversion of serine and glycine with tetrahydrofolate (THF) serving as the one-carbon carrier. This reaction serves as the major source of one-carbon groups required for the biosynthesis of purines, thymidylate, methionine, and other important biomolecules. Also exhibits THF-independent aldolase activity toward beta-hydroxyamino acids, producing glycine and aldehydes, via a retro-aldol mechanism. The polypeptide is Serine hydroxymethyltransferase 3 (Burkholderia lata (strain ATCC 17760 / DSM 23089 / LMG 22485 / NCIMB 9086 / R18194 / 383)).